A 477-amino-acid polypeptide reads, in one-letter code: Methionine aminopeptidase 2 (477 aa).

A disordered region spans residues 1-121 (MAGVEEAASC…TDPPSVPICD (121 aa)). Position 2 is an N-acetylalanine (Ala-2). Positions 36-46 (KKKKRKKKKSK) are enriched in basic residues. Ser-45 bears the Phosphoserine mark. Residues 54–78 (EPDKEAGASVDEVTRQLERQALEEK) are compositionally biased toward basic and acidic residues. A Phosphoserine; alternate modification is found at Ser-62. O-linked (GlcNAc) serine; alternate glycosylation is present at Ser-62. A compositionally biased stretch (acidic residues) spans 79–91 (EKDDDDEDGDGDG). The span at 96 to 108 (GKKKKKKKKKRGP) shows a compositional bias: basic residues. His-230 lines the substrate pocket. The a divalent metal cation site is built by Asp-250, Asp-261, and His-330. Residue His-338 coordinates substrate. Glu-363 and Glu-458 together coordinate a divalent metal cation.

It belongs to the peptidase M24A family. Methionine aminopeptidase eukaryotic type 2 subfamily. Binds EIF2S1 at low magnesium concentrations. Interacts strongly with the eIF-2 gamma-subunit EIF2S3. Co(2+) is required as a cofactor. It depends on Zn(2+) as a cofactor. The cofactor is Mn(2+). Requires Fe(2+) as cofactor. Contains approximately 12 O-linked N-acetylglucosamine (GlcNAc) residues. O-glycosylation is required for EIF2S1 binding.

The protein localises to the cytoplasm. The enzyme catalyses Release of N-terminal amino acids, preferentially methionine, from peptides and arylamides.. Functionally, cotranslationally removes the N-terminal methionine from nascent proteins. The N-terminal methionine is often cleaved when the second residue in the primary sequence is small and uncharged (Met-Ala-, Cys, Gly, Pro, Ser, Thr, or Val). In terms of biological role, protects eukaryotic initiation factor EIF2S1 from translation-inhibiting phosphorylation by inhibitory kinases such as EIF2AK2/PKR and EIF2AK1/HCR. Plays a critical role in the regulation of protein synthesis. This Bos taurus (Bovine) protein is Methionine aminopeptidase 2.